The following is a 452-amino-acid chain: Phosphatidylserine synthase 2 (452 aa).

Residues methionine 1–arginine 35 are Cytoplasmic-facing. A helical transmembrane segment spans residues alanine 36 to glutamate 56. Residues glutamate 57–glycine 69 are Lumenal-facing. A helical transmembrane segment spans residues isoleucine 70–phenylalanine 90. The Cytoplasmic portion of the chain corresponds to threonine 91–arginine 99. The chain crosses the membrane as a helical span at residues phenylalanine 100–valine 120. The Lumenal segment spans residues histidine 121–arginine 286. Residues tryptophan 287–leucine 307 traverse the membrane as a helical segment. Lysine 308 is a topological domain (cytoplasmic). Residues phenylalanine 309–asparagine 329 form a helical membrane-spanning segment. Residues valine 330–lysine 349 lie on the Lumenal side of the membrane. The chain crosses the membrane as a helical span at residues lysine 350–valine 370. Residues lysine 371–threonine 376 are Cytoplasmic-facing. A helical membrane pass occupies residues isoleucine 377–leucine 397. Topologically, residues valine 398–serine 452 are lumenal. The tract at residues arginine 419–serine 452 is disordered. Residues serine 430–methionine 444 are compositionally biased toward polar residues.

Belongs to the phosphatidyl serine synthase family.

It is found in the endoplasmic reticulum membrane. It catalyses the reaction a 1,2-diacyl-sn-glycero-3-phosphoethanolamine + L-serine = a 1,2-diacyl-sn-glycero-3-phospho-L-serine + ethanolamine. The enzyme catalyses 1-hexadecanoyl-2-(9Z-octadecenoyl)-sn-glycero-3-phosphoethanolamine + L-serine = 1-hexadecanoyl-2-(9Z-octadecenoyl)-sn-glycero-3-phospho-L-serine + ethanolamine. The catalysed reaction is 1-hexadecanoyl-2-(4Z,7Z,10Z,13Z,16Z,19Z-docosahexaenoyl)-sn-glycero-3-phosphoethanolamine + L-serine = 1-hexadecanoyl-2-(4Z,7Z,10Z,13Z,16Z,19Z-docosahexaenoyl)-sn-glycero-3-phosphoserine + ethanolamine. It carries out the reaction 1-octadecanoyl-2-(5Z,8Z,11Z,14Z)-eicosatetraenoyl-sn-glycero-3-phosphoethanolamine + L-serine = 1-octadecanoyl-2-(5Z,8Z,11Z,14Z)-eicosatetraenoyl-sn-glycero-3-phosphoserine + ethanolamine. It catalyses the reaction 1-octadecanoyl-2-(4Z,7Z,10Z,13Z,16Z,19Z-docosahexaenoyl)-sn-glycero-3-phosphoethanolamine + L-serine = 1-octadecanoyl-2-(4Z,7Z,10Z,13Z,16Z,19Z-docosahexaenoyl)-sn-glycero-3-phosphoserine + ethanolamine. The enzyme catalyses 1-(1Z-octadecenyl)-2-(4Z,7Z,10Z,13Z,16Z,19Z-docosahexaenoyl)-sn-glycero-3-phosphoethanolamine + L-serine = 1-(1Z-octadecenyl)-2-(4Z,7Z,10Z,13Z,16Z,19Z-docosahexaenoyl)-sn-glycero-3-phospho-L-serine + ethanolamine. The catalysed reaction is 1-octadecanoyl-2-(9Z-octadecenoyl)-sn-glycero-3-phosphoethanolamine + L-serine = 1-octadecanoyl-2-(9Z-octadecenoyl)-sn-glycero-3-phospho-L-serine + ethanolamine. It carries out the reaction 1-(1Z-octadecenyl)-2-(9Z-octadecenoyl)-sn-glycero-3-phosphoethanolamine + L-serine = 1-(1Z-octadecenyl)-2-(9Z-octadecenoyl)-sn-glycero-3-phospho-L-serine + ethanolamine. It catalyses the reaction 1-(1Z-octadecenyl)-2-(5Z,8Z,11Z,14Z- eicosatetraenoyl)-sn-glycero-3-phosphoethanolamine + L-serine = 1-(1Z-octadecenyl)-2-(5Z,8Z,11Z,14Z-eicosatetraenoyl)-sn-glycero-3-phospho-L-serine + ethanolamine. Its pathway is phospholipid metabolism; phosphatidylserine biosynthesis. In terms of biological role, catalyzes a base-exchange reaction in which the polar head group of phosphatidylethanolamine (PE) or phosphatidylcholine (PC) is replaced by L-serine. Catalyzes the conversion of phosphatatidylethanolamine and does not act on phosphatidylcholine. Can utilize both phosphatidylethanolamine (PE) plasmalogen and diacyl PE as substrate and the latter is six times better utilized, indicating the importance of an ester linkage at the sn-1 position. Although it shows no sn-1 fatty acyl preference, exhibits significant preference towards docosahexaenoic acid (22:6n-3) compared with 18:1 or 20:4 at the sn-2 position. In Danio rerio (Zebrafish), this protein is Phosphatidylserine synthase 2 (ptdss2).